The sequence spans 392 residues: Formate-dependent phosphoribosylglycinamide formyltransferase (392 aa).

Residues 20 to 21 (EL) and glutamate 80 each bind N(1)-(5-phospho-beta-D-ribosyl)glycinamide. ATP is bound by residues arginine 112, lysine 153, 158–163 (SSGKGQ), 193–196 (EEFI), and glutamate 201. One can recognise an ATP-grasp domain in the interval 117-306 (RLAAEELGLP…EFELHVRAIL (190 aa)). Residues glutamate 265 and glutamate 277 each contribute to the Mg(2+) site. N(1)-(5-phospho-beta-D-ribosyl)glycinamide contacts are provided by residues aspartate 284, lysine 354, and 361–362 (RR).

This sequence belongs to the PurK/PurT family. Homodimer.

It catalyses the reaction N(1)-(5-phospho-beta-D-ribosyl)glycinamide + formate + ATP = N(2)-formyl-N(1)-(5-phospho-beta-D-ribosyl)glycinamide + ADP + phosphate + H(+). Its pathway is purine metabolism; IMP biosynthesis via de novo pathway; N(2)-formyl-N(1)-(5-phospho-D-ribosyl)glycinamide from N(1)-(5-phospho-D-ribosyl)glycinamide (formate route): step 1/1. Functionally, involved in the de novo purine biosynthesis. Catalyzes the transfer of formate to 5-phospho-ribosyl-glycinamide (GAR), producing 5-phospho-ribosyl-N-formylglycinamide (FGAR). Formate is provided by PurU via hydrolysis of 10-formyl-tetrahydrofolate. This chain is Formate-dependent phosphoribosylglycinamide formyltransferase, found in Geobacter metallireducens (strain ATCC 53774 / DSM 7210 / GS-15).